Here is a 199-residue protein sequence, read N- to C-terminus: dCTP deaminase (199 aa).

DCTP-binding positions include 110-115 (RSSLAR), Asp128, 136-138 (VLE), Tyr171, and Gln182. Catalysis depends on Glu138, which acts as the Proton donor/acceptor.

It belongs to the dCTP deaminase family. Homotrimer.

It carries out the reaction dCTP + H2O + H(+) = dUTP + NH4(+). The protein operates within pyrimidine metabolism; dUMP biosynthesis; dUMP from dCTP (dUTP route): step 1/2. Its function is as follows. Catalyzes the deamination of dCTP to dUTP. This is dCTP deaminase from Pseudoalteromonas atlantica (strain T6c / ATCC BAA-1087).